We begin with the raw amino-acid sequence, 243 residues long: NAD-dependent protein deacetylase (243 aa).

The Deacetylase sirtuin-type domain maps to 1 to 243 (MKHDLETLKH…VSVVKSLMTE (243 aa)). NAD(+) contacts are provided by Ala24, Phe35, Arg36, Gln105, Ile107, Asp108, and His123. Phe35 is a nicotinamide binding site. 2 residues coordinate nicotinamide: Ile107 and Asp108. His123 serves as the catalytic Proton acceptor. Positions 131, 134, 151, and 154 each coordinate Zn(2+). Residues Ser192, Ser193, Asn215, and Asp232 each coordinate NAD(+).

This sequence belongs to the sirtuin family. Class U subfamily. The cofactor is Zn(2+).

The protein resides in the cytoplasm. It carries out the reaction N(6)-acetyl-L-lysyl-[protein] + NAD(+) + H2O = 2''-O-acetyl-ADP-D-ribose + nicotinamide + L-lysyl-[protein]. Its function is as follows. NAD-dependent protein deacetylase which modulates the activities of several enzymes which are inactive in their acetylated form. In Staphylococcus aureus (strain MRSA252), this protein is NAD-dependent protein deacetylase.